The following is a 491-amino-acid chain: MKNQDQALIFEVTKEGRVGYSLPKLDVEEVKLEDVFESDYIRVEDAELPEVSELDIMRHYTALSNRNHGVDSGFYPLGSCTMKYNPKINESVARFAGFANIHPLQDEKTVQGAMELMYDLQEHLIEITGMDTVTLQPAAGAHGEWTGLMLIRAYHEANGDFNRTKVIVPDSAHGTNPASATVAGFETITVKSNENGLVDLEDLKRVVNEETAALMLTNPNTLGLFEENILEMAEIVHNAGGKLYYDGANLNAVLSQARPGDMGFDVVHLNLHKTFTGPHGGGGPGSGPVGVKADLIPYLPKPILEKTENGYHFNYDRPEAIGRVKPFYGNFGINVRAYTYIRSMGPDGLRAVTEYAVLNANYMMRRLAPFYDLPFNRHCKHEFVLSGRRQKKLGVRTLDIAKRLLDFGYHPPTIYFPLNVEECIMIEPTETESKETLDGFIDKMIQIAKEVEENPEVVQEAPHTTVIKRLDETMAARKPVLRYAKPAPVQV.

Position 273 is an N6-(pyridoxal phosphate)lysine (lysine 273).

This sequence belongs to the GcvP family. C-terminal subunit subfamily. In terms of assembly, the glycine cleavage system is composed of four proteins: P, T, L and H. In this organism, the P 'protein' is a heterodimer of two subunits. Pyridoxal 5'-phosphate is required as a cofactor.

The enzyme catalyses N(6)-[(R)-lipoyl]-L-lysyl-[glycine-cleavage complex H protein] + glycine + H(+) = N(6)-[(R)-S(8)-aminomethyldihydrolipoyl]-L-lysyl-[glycine-cleavage complex H protein] + CO2. The glycine cleavage system catalyzes the degradation of glycine. The P protein binds the alpha-amino group of glycine through its pyridoxal phosphate cofactor; CO(2) is released and the remaining methylamine moiety is then transferred to the lipoamide cofactor of the H protein. The sequence is that of Probable glycine dehydrogenase (decarboxylating) subunit 2 from Bacillus cereus (strain G9842).